We begin with the raw amino-acid sequence, 284 residues long: 4-diphosphocytidyl-2-C-methyl-D-erythritol kinase (284 aa).

Lysine 14 is an active-site residue. Residue 98 to 108 (PMGGGLGGGSS) coordinates ATP. The active site involves aspartate 140.

This sequence belongs to the GHMP kinase family. IspE subfamily.

The catalysed reaction is 4-CDP-2-C-methyl-D-erythritol + ATP = 4-CDP-2-C-methyl-D-erythritol 2-phosphate + ADP + H(+). It functions in the pathway isoprenoid biosynthesis; isopentenyl diphosphate biosynthesis via DXP pathway; isopentenyl diphosphate from 1-deoxy-D-xylulose 5-phosphate: step 3/6. Functionally, catalyzes the phosphorylation of the position 2 hydroxy group of 4-diphosphocytidyl-2C-methyl-D-erythritol. In Shewanella sp. (strain ANA-3), this protein is 4-diphosphocytidyl-2-C-methyl-D-erythritol kinase.